The primary structure comprises 578 residues: MNISAVFSALLVSIMAAVLWKHVKLLDQFYVIEEELELTRQSQELSQVRIDYQAALQALVEDGTRMVCSGRMHTDRVCRFESLCYSTEAEEFVFFHSNASIMLPNLGPRRFQPALLDLSSVDDHNTQYFNFIELPAAALKFMPKPVFVPDVALIMNRFNPDNLMHVFHDDLLPIFYTIQQFPDLDFESRLFFMEGWNEGLHFELYKFMSNKQPLLKEQLKTLGRLLCFTKSYVGLSKITTWYQYGFVQPQGPKANILVSGNEIRHFAKFMMGKLNITLDQNAAEAYIVLFSRSMNRLIVNEAELLLALAQEFQMKTITVSLEDHSFSDIVRLLSNATMLVSMHGAQLVTSLFLPKGAVVVELFPYGINPEHYTPYKTLSTLPGMELQYVAWQNTEEENTITYPDRPWEQGGIVHLETKEQERIKKSKEVPRHLCCRNPEWLFRIYQDTKVNISSLIQVIKSTVKKKLGLRRQKWTQGLYPGKVRESKCQASAQGTSEAKLFVSWQIPWNLKFLKVRDVKYEVWIQEQGENSYMPYILSQQNYTFSENIKPFTTYLVWIRCIFNKTLLGPFAEVLVCST.

The Cytoplasmic portion of the chain corresponds to 1-4 (MNIS). A helical; Signal-anchor for type II membrane protein transmembrane segment spans residues 5–25 (AVFSALLVSIMAAVLWKHVKL). The Lumenal segment spans residues 26-578 (LDQFYVIEEE…PFAEVLVCST (553 aa)). N-linked (GlcNAc...) asparagine glycosylation is found at asparagine 98, asparagine 275, asparagine 335, asparagine 451, asparagine 541, and asparagine 563. A Fibronectin type-III domain is found at 484–578 (RESKCQASAQ…PFAEVLVCST (95 aa)).

Belongs to the glycosyltransferase 61 family.

It is found in the endoplasmic reticulum membrane. The catalysed reaction is 3-O-(alpha-D-mannosyl)-L-threonyl-[protein] + UDP-N-acetyl-alpha-D-glucosamine = 3-O-(N-acetyl-beta-D-glucosaminyl-(1-&gt;4)-alpha-D-mannosyl)-L-threonyl-[protein] + UDP + H(+). It participates in protein modification; protein glycosylation. Functionally, O-linked mannose beta-1,4-N-acetylglucosaminyltransferase that transfers UDP-N-acetyl-D-glucosamine to the 4-position of the mannose to generate N-acetyl-D-glucosamine-beta-1,4-O-D-mannosylprotein. Involved in the biosynthesis of the phosphorylated O-mannosyl trisaccharide (N-acetylgalactosamine-beta-3-N-acetylglucosamine-beta-4-(phosphate-6-)mannose), a carbohydrate structure present in alpha-dystroglycan (DAG1), which is required for binding laminin G-like domain-containing extracellular proteins with high affinity. The polypeptide is Protein O-linked-mannose beta-1,4-N-acetylglucosaminyltransferase 2 (pomgnt2) (Xenopus laevis (African clawed frog)).